Here is a 276-residue protein sequence, read N- to C-terminus: Phosphonates import ATP-binding protein PhnC (276 aa).

Residues Leu-2–Asp-246 enclose the ABC transporter domain. Residue Gly-35–Ser-42 participates in ATP binding.

The protein belongs to the ABC transporter superfamily. Phosphonates importer (TC 3.A.1.9.1) family. The complex is composed of two ATP-binding proteins (PhnC), two transmembrane proteins (PhnE) and a solute-binding protein (PhnD).

Its subcellular location is the cell inner membrane. It carries out the reaction phosphonate(out) + ATP + H2O = phosphonate(in) + ADP + phosphate + H(+). Functionally, part of the ABC transporter complex PhnCDE involved in phosphonates import. Responsible for energy coupling to the transport system. The chain is Phosphonates import ATP-binding protein PhnC from Alcaligenes faecalis.